The primary structure comprises 273 residues: tRNA pseudouridine synthase B (273 aa).

Catalysis depends on D38, which acts as the Nucleophile.

It belongs to the pseudouridine synthase TruB family. Type 1 subfamily.

The enzyme catalyses uridine(55) in tRNA = pseudouridine(55) in tRNA. Responsible for synthesis of pseudouridine from uracil-55 in the psi GC loop of transfer RNAs. This Sulfurimonas denitrificans (strain ATCC 33889 / DSM 1251) (Thiomicrospira denitrificans (strain ATCC 33889 / DSM 1251)) protein is tRNA pseudouridine synthase B.